A 127-amino-acid polypeptide reads, in one-letter code: Large ribosomal subunit protein bL19 (127 aa).

This sequence belongs to the bacterial ribosomal protein bL19 family.

Its function is as follows. This protein is located at the 30S-50S ribosomal subunit interface and may play a role in the structure and function of the aminoacyl-tRNA binding site. The protein is Large ribosomal subunit protein bL19 of Ruegeria pomeroyi (strain ATCC 700808 / DSM 15171 / DSS-3) (Silicibacter pomeroyi).